A 200-amino-acid polypeptide reads, in one-letter code: Protein C2-DOMAIN ABA-RELATED 5 (200 aa).

The C2 domain occupies 22–142; sequence VAGEKHKDRR…LKMHLHDLPS (121 aa). Ca(2+) contacts are provided by R57, D58, D63, D109, Y110, D111, and D117.

This sequence belongs to the plant CAR protein family. As to quaternary structure, binds to PYR/PYL/RCAR abscisic acid intracellular receptors in an ABA-independent manner, both at the plasma membrane and in the nucleus.

It localises to the cell membrane. It is found in the nucleus. In terms of biological role, stimulates the GTPase/ATPase activities of Obg-like ATPases. Mediates the transient calcium-dependent interaction of PYR/PYL/RCAR abscisic acid (ABA) receptors with the plasma membrane and thus regulates ABA sensitivity. This is Protein C2-DOMAIN ABA-RELATED 5 from Arabidopsis thaliana (Mouse-ear cress).